A 106-amino-acid polypeptide reads, in one-letter code: Small ribosomal subunit protein uS10 (106 aa).

This sequence belongs to the universal ribosomal protein uS10 family. Part of the 30S ribosomal subunit.

Functionally, involved in the binding of tRNA to the ribosomes. This Prochlorococcus marinus (strain MIT 9303) protein is Small ribosomal subunit protein uS10.